Reading from the N-terminus, the 143-residue chain is Acetyltransferase plu1384 (143 aa).

An N-acetyltransferase domain is found at 1–138; the sequence is MEIRVFRQDD…ESVIFSKRLI (138 aa).

The protein belongs to the acetyltransferase family. YpeA subfamily.

The polypeptide is Acetyltransferase plu1384 (Photorhabdus laumondii subsp. laumondii (strain DSM 15139 / CIP 105565 / TT01) (Photorhabdus luminescens subsp. laumondii)).